The primary structure comprises 746 residues: Exostosin-1 (746 aa).

Residues 1–7 lie on the Cytoplasmic side of the membrane; sequence MQAKKRY. The helical; Signal-anchor for type II membrane protein transmembrane segment at 8-28 threads the bilayer; the sequence is FILLSAGSCLALLFYFGGLQF. The Lumenal portion of the chain corresponds to 29 to 746; the sequence is RASRSHSRRE…RKKYRDIERL (718 aa). N-linked (GlcNAc...) asparagine glycosylation occurs at asparagine 89. Cystine bridges form between cysteine 98/cysteine 103 and cysteine 109/cysteine 152. Residues leucine 166 and tyrosine 203 each contribute to the a protein site. Positions 267, 269, 271, and 280 each coordinate UDP. Residues cysteine 298 and cysteine 312 are joined by a disulfide bond. Histidine 300 contributes to the a protein binding site. Positions 319 and 324 each coordinate UDP. Asparagine 330 carries an N-linked (GlcNAc...) asparagine glycan. 2 cysteine pairs are disulfide-bonded: cysteine 334/cysteine 355 and cysteine 652/cysteine 704. Arginine 346 and glutamate 349 together coordinate UDP.

Belongs to the glycosyltransferase 47 family. As to quaternary structure, part of the heparan sulfate polymerase, a dimeric complex composed of EXT1 and EXT2. Could also form homooligomeric complexes. Interacts with NDST1. N-glycosylated.

Its subcellular location is the golgi apparatus membrane. The protein resides in the golgi apparatus. It localises to the cis-Golgi network membrane. It is found in the endoplasmic reticulum membrane. The catalysed reaction is 3-O-{alpha-D-GlcNAc-[(1-&gt;4)-beta-D-GlcA-(1-&gt;4)-alpha-D-GlcNAc](n)-(1-&gt;4)-beta-D-GlcA-(1-&gt;3)-beta-D-Gal-(1-&gt;3)-beta-D-Gal-(1-&gt;4)-beta-D-Xyl}-L-seryl-[protein] + UDP-alpha-D-glucuronate = 3-O-{[(1-&gt;4)-beta-D-GlcA-(1-&gt;4)-alpha-D-GlcNAc](n+1)-(1-&gt;4)-beta-D-GlcA-(1-&gt;3)-beta-D-Gal-(1-&gt;3)-beta-D-Gal-(1-&gt;4)-beta-D-Xyl}-L-seryl-[protein] + UDP + H(+). The protein operates within protein modification; protein glycosylation. In terms of biological role, glycosyltransferase forming with EXT2 the heterodimeric heparan sulfate polymerase which catalyzes the elongation of the heparan sulfate glycan backbone. Glycan backbone extension consists in the alternating transfer of (1-&gt;4)-beta-D-GlcA and (1-&gt;4)-alpha-D-GlcNAc residues from their respective UDP-sugar donors. Both EXT1 and EXT2 are required for the full activity of the polymerase since EXT1 bears the N-acetylglucosaminyl-proteoglycan 4-beta-glucuronosyltransferase activity within the complex while EXT2 carries the glucuronosyl-N-acetylglucosaminyl-proteoglycan 4-alpha-N-acetylglucosaminyltransferase activity. Heparan sulfate proteoglycans are ubiquitous components of the extracellular matrix and play an important role in tissue homeostasis and signaling. The chain is Exostosin-1 (EXT1) from Bos taurus (Bovine).